We begin with the raw amino-acid sequence, 204 residues long: Spermatogenesis-associated protein 46 (204 aa).

The interval S101–G120 is disordered.

In terms of tissue distribution, testis-specific.

The protein resides in the nucleus membrane. In terms of biological role, plays a role in spermiogenesis and fertilization. This is Spermatogenesis-associated protein 46 (Spata46) from Mus musculus (Mouse).